We begin with the raw amino-acid sequence, 717 residues long: Radial spoke head protein 6 homolog A (717 aa).

4 disordered regions span residues 1–65, 503–523, 563–588, and 672–717; these read MGDL…SLSQ, SEEE…YEEN, TEEE…QEVG, and GPEI…ETDD. Acidic residues-rich tracts occupy residues 503-513, 564-585, and 700-717; these read SEEEGDEEEEG, EEEE…EVEQ, and TEEE…ETDD.

The protein belongs to the flagellar radial spoke RSP4/6 family. As to quaternary structure, component of the axonemal radial spoke 1 (RS1) and 2 (RS2) complexes, at least composed of spoke head proteins RSPH1, RSPH3, RSPH9 and the cilia-specific component RSPH4A or sperm-specific component RSPH6A, spoke stalk proteins RSPH14, DNAJB13, DYDC1, ROPN1L and NME5, and the RS1 complex-specific anchor protein IQUB. Interacts with RSPH1. Interacts with RSPH3B. Interacts with RSPH4A. Interacts with RSPH9. Interacts with RSPH10B. Post-translationally, phosphorylated by PKA. Phosphorylation increases in capacitated sperm.

Its subcellular location is the cytoplasm. It is found in the cytoskeleton. It localises to the flagellum axoneme. Functions as part of radial spoke complexes in the axoneme of sperm flagella that play an important part in motility. The triple radial spokes (RS1, RS2 and RS3) are required to modulate beating of the sperm flagellum. The sequence is that of Radial spoke head protein 6 homolog A from Homo sapiens (Human).